The sequence spans 341 residues: Ketol-acid reductoisomerase (NADP(+)) (341 aa).

A KARI N-terminal Rossmann domain is found at 2–181 (AKVYYNGDAN…GAARAGVLET (180 aa)). NADP(+) is bound by residues 25 to 28 (YGSQ), Arg48, Ser52, and 82 to 85 (DEKQ). His107 is a catalytic residue. Residue Gly133 coordinates NADP(+). The KARI C-terminal knotted domain occupies 182–327 (TFKEETETDL…RELRSMMPFV (146 aa)). Residues Asp190, Glu194, Glu226, and Glu230 each coordinate Mg(2+). Ser251 is a substrate binding site.

The protein belongs to the ketol-acid reductoisomerase family. The cofactor is Mg(2+).

It catalyses the reaction (2R)-2,3-dihydroxy-3-methylbutanoate + NADP(+) = (2S)-2-acetolactate + NADPH + H(+). The enzyme catalyses (2R,3R)-2,3-dihydroxy-3-methylpentanoate + NADP(+) = (S)-2-ethyl-2-hydroxy-3-oxobutanoate + NADPH + H(+). The protein operates within amino-acid biosynthesis; L-isoleucine biosynthesis; L-isoleucine from 2-oxobutanoate: step 2/4. Its pathway is amino-acid biosynthesis; L-valine biosynthesis; L-valine from pyruvate: step 2/4. Involved in the biosynthesis of branched-chain amino acids (BCAA). Catalyzes an alkyl-migration followed by a ketol-acid reduction of (S)-2-acetolactate (S2AL) to yield (R)-2,3-dihydroxy-isovalerate. In the isomerase reaction, S2AL is rearranged via a Mg-dependent methyl migration to produce 3-hydroxy-3-methyl-2-ketobutyrate (HMKB). In the reductase reaction, this 2-ketoacid undergoes a metal-dependent reduction by NADPH to yield (R)-2,3-dihydroxy-isovalerate. The protein is Ketol-acid reductoisomerase (NADP(+)) of Geobacillus thermodenitrificans (strain NG80-2).